A 332-amino-acid polypeptide reads, in one-letter code: Ubiquinone biosynthesis protein COQ4, mitochondrial (332 aa).

The transit peptide at 1–24 (MLRLGVSRTPINRQFVGYEQRRHF) directs the protein to the mitochondrion. Residues His210, Asp211, His214, and Glu226 each coordinate Zn(2+).

The protein belongs to the COQ4 family. As to quaternary structure, component of a multi-subunit COQ enzyme complex, composed of at least COQ3, COQ4, COQ5, COQ6, COQ7 and COQ9. Requires Zn(2+) as cofactor.

Its subcellular location is the mitochondrion inner membrane. The catalysed reaction is a 4-hydroxy-3-methoxy-5-(all-trans-polyprenyl)benzoate + H(+) = a 2-methoxy-6-(all-trans-polyprenyl)phenol + CO2. It functions in the pathway cofactor biosynthesis; ubiquinone biosynthesis. In terms of biological role, lyase that catalyzes the C1-decarboxylation of 4-hydroxy-3-methoxy-5-(all-trans-polyprenyl)benzoic acid into 2-methoxy-6-(all-trans-polyprenyl)phenol during ubiquinone biosynthesis. The chain is Ubiquinone biosynthesis protein COQ4, mitochondrial from Zygosaccharomyces rouxii (strain ATCC 2623 / CBS 732 / NBRC 1130 / NCYC 568 / NRRL Y-229).